Reading from the N-terminus, the 602-residue chain is 4-hydroxy-3-methylbut-2-en-1-yl diphosphate synthase (flavodoxin) (602 aa).

[4Fe-4S] cluster contacts are provided by C508, C511, C543, and E550.

Belongs to the IspG family. [4Fe-4S] cluster serves as cofactor.

The enzyme catalyses (2E)-4-hydroxy-3-methylbut-2-enyl diphosphate + oxidized [flavodoxin] + H2O + 2 H(+) = 2-C-methyl-D-erythritol 2,4-cyclic diphosphate + reduced [flavodoxin]. It participates in isoprenoid biosynthesis; isopentenyl diphosphate biosynthesis via DXP pathway; isopentenyl diphosphate from 1-deoxy-D-xylulose 5-phosphate: step 5/6. Converts 2C-methyl-D-erythritol 2,4-cyclodiphosphate (ME-2,4cPP) into 1-hydroxy-2-methyl-2-(E)-butenyl 4-diphosphate. This is 4-hydroxy-3-methylbut-2-en-1-yl diphosphate synthase (flavodoxin) from Chlamydia trachomatis serovar L2 (strain ATCC VR-902B / DSM 19102 / 434/Bu).